Here is a 41-residue protein sequence, read N- to C-terminus: uncharacterized protein (41 aa).

This is an uncharacterized protein from Saccharomyces cerevisiae (strain ATCC 204508 / S288c) (Baker's yeast).